Here is a 161-residue protein sequence, read N- to C-terminus: ATP synthase subunit b 1 (161 aa).

The helical transmembrane segment at 6–26 threads the bilayer; it reads EFYVALGFVIFVAILLYYGVH.

It belongs to the ATPase B chain family. F-type ATPases have 2 components, F(1) - the catalytic core - and F(0) - the membrane proton channel. F(1) has five subunits: alpha(3), beta(3), gamma(1), delta(1), epsilon(1). F(0) has three main subunits: a(1), b(2) and c(10-14). The alpha and beta chains form an alternating ring which encloses part of the gamma chain. F(1) is attached to F(0) by a central stalk formed by the gamma and epsilon chains, while a peripheral stalk is formed by the delta and b chains.

It is found in the cell inner membrane. Functionally, f(1)F(0) ATP synthase produces ATP from ADP in the presence of a proton or sodium gradient. F-type ATPases consist of two structural domains, F(1) containing the extramembraneous catalytic core and F(0) containing the membrane proton channel, linked together by a central stalk and a peripheral stalk. During catalysis, ATP synthesis in the catalytic domain of F(1) is coupled via a rotary mechanism of the central stalk subunits to proton translocation. In terms of biological role, component of the F(0) channel, it forms part of the peripheral stalk, linking F(1) to F(0). This chain is ATP synthase subunit b 1, found in Beijerinckia indica subsp. indica (strain ATCC 9039 / DSM 1715 / NCIMB 8712).